The following is a 94-amino-acid chain: Surfactant-associated protein 3 (94 aa).

In terms of tissue distribution, found in lung alveolar cells type I and II, as well as alveolar macrophages (at protein level). Detected also in testis and kidney. Expressed by different tissues of the ocular system like cornea, conjuctiva, lacrimal gland, eyelid and efferent tear ducts (at protein level). From these tissues is secreted into the tear film (at protein level).

It localises to the cytoplasm. The protein resides in the secreted. Functionally, putative surfactant protein. May be involved in wound healing and in the reduction of the surface tension at the ocular surface. The protein is Surfactant-associated protein 3 (SFTA3) of Homo sapiens (Human).